The sequence spans 267 residues: Orotidine 5'-phosphate decarboxylase (267 aa).

Substrate contacts are provided by residues D37, 59–61, 91–100, Y217, and R235; these read KTH and DRKFADIGNT. K93 acts as the Proton donor in catalysis.

It belongs to the OMP decarboxylase family.

The enzyme catalyses orotidine 5'-phosphate + H(+) = UMP + CO2. It participates in pyrimidine metabolism; UMP biosynthesis via de novo pathway; UMP from orotate: step 2/2. This Eremothecium gossypii (strain ATCC 10895 / CBS 109.51 / FGSC 9923 / NRRL Y-1056) (Yeast) protein is Orotidine 5'-phosphate decarboxylase (URA3).